The following is an 834-amino-acid chain: Serine/threonine-protein kinase TNNI3K (834 aa).

Residue Gly2 is the site of N-myristoyl glycine attachment. Residues 21 to 49 adopt a coiled-coil conformation; it reads SESYAIIIERLEDDLQIKENEFQELRHIF. 10 ANK repeats span residues 66 to 96, 100 to 129, 133 to 162, 166 to 195, 199 to 229, 233 to 262, 268 to 297, 303 to 334, 338 to 367, and 380 to 409; these read RGLSLLHLCCACGGNKSHIRALMLKGLRPSR, NGFPALHLAVYKDSLELITSLLHSGADVQQ, GGLTALHIAAIAGHPEAVEVLLQHGANVNV, VFFTPLHIAAYYGHEQVTSVLLKFGADVNV, VGDRPLHLASAKGFFNIVKLLVEGNKADVNA, EDHVPLHFCSRFGHHNIVSYLLQSDLEVQP, YGDTPLHLACYNGNFEVAKEIVHVTGTESL, FSETAFHSACTYGKNIDLVKFLLDQNAVNINH, DGHTGLHSACYHGHIRLVQFLLDNGADMNL, and DEQTCLMWAYEKGHDAIVTLLKHYKRPQDE. The Protein kinase domain maps to 462-722; the sequence is IEFHEIIGSG…EVVRKLEECL (261 aa). ATP is bound by residues 468–476 and Lys489; that span reads IGSGSFGKV. Residue Asp587 is the Proton acceptor of the active site. The disordered stretch occupies residues 815-834; the sequence is PMSPMHLHSRRNSGSFEDGN.

It belongs to the protein kinase superfamily. TKL Ser/Thr protein kinase family. MAP kinase kinase kinase subfamily. In terms of assembly, interacts with TNNI3, ACTC, ACTA1, MYBPC3, AIP, FABP3 and HADHB. The cofactor is Mg(2+). In terms of processing, autophosphorylated.

The protein localises to the nucleus. The protein resides in the cytoplasm. It catalyses the reaction L-seryl-[protein] + ATP = O-phospho-L-seryl-[protein] + ADP + H(+). The catalysed reaction is L-threonyl-[protein] + ATP = O-phospho-L-threonyl-[protein] + ADP + H(+). Functionally, may play a role in cardiac physiology. The protein is Serine/threonine-protein kinase TNNI3K of Mus musculus (Mouse).